The chain runs to 359 residues: MRKIVHVDMDAFYASVEQRDDPGLRGKPVVVAWRGARSVVCAASYEARTFGIRSAMPAVRAERLCPNAIFVPPDFVRYKAVSRQVREIFHRHTDLVEPLSLDEAYLDVTQAKTGMQLATEIAQLIRTQIREETELTASAGIAPNKFLAKIASDWRKPDGQFVIAPSRIDAFLLPLKVNRIPGVGKVMDGKLAALGIVTVADLRLRPLEELQAHFGSFGQSLYRRARGIDERPVEPDQDVQSVSSEDTFSEDLALDALDTHILRLAEKTWLATRRTERIGRTVVLKLKTSNFRILTRSCTPEQPPVSQEALAQIALALTRRVELPAQTRYRLVGVGLSGFSNVEEGAVQGQLFGEIPQAE.

The UmuC domain occupies isoleucine 4 to glycine 184. Residues aspartate 8 and aspartate 102 each contribute to the Mg(2+) site. Glutamate 103 is an active-site residue.

This sequence belongs to the DNA polymerase type-Y family. Monomer. Requires Mg(2+) as cofactor.

The protein localises to the cytoplasm. It carries out the reaction DNA(n) + a 2'-deoxyribonucleoside 5'-triphosphate = DNA(n+1) + diphosphate. Functionally, poorly processive, error-prone DNA polymerase involved in untargeted mutagenesis. Copies undamaged DNA at stalled replication forks, which arise in vivo from mismatched or misaligned primer ends. These misaligned primers can be extended by PolIV. Exhibits no 3'-5' exonuclease (proofreading) activity. May be involved in translesional synthesis, in conjunction with the beta clamp from PolIII. This chain is DNA polymerase IV, found in Xanthomonas oryzae pv. oryzae (strain MAFF 311018).